The primary structure comprises 763 residues: Phosphoglycerol transferase I (763 aa).

The next 4 helical transmembrane spans lie at 1–21 (MSELLSVALFLASVLIYAWKA), 26–46 (WWFAATLTVLGLFVILNITLY), 77–97 (ILPGIGIALALVAVFGALGWV), and 108–128 (VGYSLLALLLALGSVDASPAF).

Belongs to the OpgB family.

The protein localises to the cell inner membrane. The enzyme catalyses a phosphatidylglycerol + a membrane-derived-oligosaccharide D-glucose = a 1,2-diacyl-sn-glycerol + a membrane-derived-oligosaccharide 6-(glycerophospho)-D-glucose.. Its pathway is glycan metabolism; osmoregulated periplasmic glucan (OPG) biosynthesis. Transfers a phosphoglycerol residue from phosphatidylglycerol to the membrane-bound nascent glucan backbones. In Salmonella choleraesuis (strain SC-B67), this protein is Phosphoglycerol transferase I.